Here is a 111-residue protein sequence, read N- to C-terminus: Small ribosomal subunit protein bS16 (111 aa).

This sequence belongs to the bacterial ribosomal protein bS16 family.

The chain is Small ribosomal subunit protein bS16 from Rickettsia canadensis (strain McKiel).